We begin with the raw amino-acid sequence, 419 residues long: Histidine--tRNA ligase (419 aa).

Belongs to the class-II aminoacyl-tRNA synthetase family.

It is found in the cytoplasm. It carries out the reaction tRNA(His) + L-histidine + ATP = L-histidyl-tRNA(His) + AMP + diphosphate + H(+). This is Histidine--tRNA ligase from Pyrobaculum aerophilum (strain ATCC 51768 / DSM 7523 / JCM 9630 / CIP 104966 / NBRC 100827 / IM2).